Reading from the N-terminus, the 446-residue chain is Tubulin beta-2 chain (446 aa).

Gln11, Glu69, Ser138, Gly142, Thr143, Gly144, Asn204, and Asn226 together coordinate GTP. A Mg(2+)-binding site is contributed by Glu69.

Belongs to the tubulin family. In terms of assembly, dimer of alpha and beta chains. A typical microtubule is a hollow water-filled tube with an outer diameter of 25 nm and an inner diameter of 15 nM. Alpha-beta heterodimers associate head-to-tail to form protofilaments running lengthwise along the microtubule wall with the beta-tubulin subunit facing the microtubule plus end conferring a structural polarity. Microtubules usually have 13 protofilaments but different protofilament numbers can be found in some organisms and specialized cells. Mg(2+) is required as a cofactor.

It is found in the cytoplasm. The protein resides in the cytoskeleton. In terms of biological role, tubulin is the major constituent of microtubules, a cylinder consisting of laterally associated linear protofilaments composed of alpha- and beta-tubulin heterodimers. Microtubules grow by the addition of GTP-tubulin dimers to the microtubule end, where a stabilizing cap forms. Below the cap, tubulin dimers are in GDP-bound state, owing to GTPase activity of alpha-tubulin. This chain is Tubulin beta-2 chain (tub2), found in Hypocrea rufa (Trichoderma viride).